Consider the following 213-residue polypeptide: Putative 3-methyladenine DNA glycosylase (213 aa).

The segment at 165-187 (GTPVPPDQVRNGPRTGVSGDGGV) is disordered.

This sequence belongs to the DNA glycosylase MPG family.

In Streptomyces avermitilis (strain ATCC 31267 / DSM 46492 / JCM 5070 / NBRC 14893 / NCIMB 12804 / NRRL 8165 / MA-4680), this protein is Putative 3-methyladenine DNA glycosylase.